Here is a 208-residue protein sequence, read N- to C-terminus: Probable molybdenum cofactor guanylyltransferase (208 aa).

Residues isoleucine 12–glycine 14, lysine 24, aspartate 72, and aspartate 101 each bind GTP. Aspartate 101 lines the Mg(2+) pocket.

It belongs to the MobA family. Requires Mg(2+) as cofactor.

It is found in the cytoplasm. It catalyses the reaction Mo-molybdopterin + GTP + H(+) = Mo-molybdopterin guanine dinucleotide + diphosphate. Functionally, transfers a GMP moiety from GTP to Mo-molybdopterin (Mo-MPT) cofactor (Moco or molybdenum cofactor) to form Mo-molybdopterin guanine dinucleotide (Mo-MGD) cofactor. In Chloroflexus aggregans (strain MD-66 / DSM 9485), this protein is Probable molybdenum cofactor guanylyltransferase.